A 252-amino-acid chain; its full sequence is Imidazole glycerol phosphate synthase subunit HisF (252 aa).

Catalysis depends on residues aspartate 11 and aspartate 130.

It belongs to the HisA/HisF family. In terms of assembly, heterodimer of HisH and HisF.

Its subcellular location is the cytoplasm. It carries out the reaction 5-[(5-phospho-1-deoxy-D-ribulos-1-ylimino)methylamino]-1-(5-phospho-beta-D-ribosyl)imidazole-4-carboxamide + L-glutamine = D-erythro-1-(imidazol-4-yl)glycerol 3-phosphate + 5-amino-1-(5-phospho-beta-D-ribosyl)imidazole-4-carboxamide + L-glutamate + H(+). It functions in the pathway amino-acid biosynthesis; L-histidine biosynthesis; L-histidine from 5-phospho-alpha-D-ribose 1-diphosphate: step 5/9. IGPS catalyzes the conversion of PRFAR and glutamine to IGP, AICAR and glutamate. The HisF subunit catalyzes the cyclization activity that produces IGP and AICAR from PRFAR using the ammonia provided by the HisH subunit. The sequence is that of Imidazole glycerol phosphate synthase subunit HisF from Paramagnetospirillum magneticum (strain ATCC 700264 / AMB-1) (Magnetospirillum magneticum).